Reading from the N-terminus, the 152-residue chain is Conglutin delta 1 (152 aa).

Residues 1 to 22 (MAKLTILIALVAALVLVVHTSA) form the signal peptide. Intrachain disulfides connect Cys-30-Cys-101, Cys-42-Cys-89, Cys-90-Cys-137, and Cys-103-Cys-145.

The protein belongs to the 2S seed storage albumins family. Heterodimer of a small chain and a large chain; disulfide-linked. As to expression, expressed in developing cotyledons and in the embryonic axis of germinating seeds.

It is found in the endoplasmic reticulum. The polypeptide is Conglutin delta 1 (Lupinus angustifolius (Narrow-leaved blue lupine)).